The following is a 149-amino-acid chain: L-alanine exporter AlaE (149 aa).

A run of 4 helical transmembrane segments spans residues 16–36 (FAMV…LSGM), 46–66 (LVAI…RDLI), 85–105 (VLAY…TVGA), and 112–132 (AAVS…GYFL).

Belongs to the AlaE exporter family.

It is found in the cell inner membrane. In terms of biological role, exports L-alanine. The protein is L-alanine exporter AlaE of Salmonella arizonae (strain ATCC BAA-731 / CDC346-86 / RSK2980).